The sequence spans 90 residues: Acylphosphatase (90 aa).

The region spanning 3 to 90 (QYRIIVDGRV…DGFQKFNISY (88 aa)) is the Acylphosphatase-like domain. Residues R18 and N36 contribute to the active site.

Belongs to the acylphosphatase family.

The catalysed reaction is an acyl phosphate + H2O = a carboxylate + phosphate + H(+). The sequence is that of Acylphosphatase (acyP) from Bacillus licheniformis (strain ATCC 14580 / DSM 13 / JCM 2505 / CCUG 7422 / NBRC 12200 / NCIMB 9375 / NCTC 10341 / NRRL NRS-1264 / Gibson 46).